A 221-amino-acid polypeptide reads, in one-letter code: Probable lipoprotein CT_734 (221 aa).

The N-terminal stretch at 1 to 24 (MKKFIYKYSFGALLLLSGLSGLSS) is a signal peptide. Cysteine 25 is lipidated: N-palmitoyl cysteine. Residue cysteine 25 is the site of S-diacylglycerol cysteine attachment.

Belongs to the chlamydial CPn_0875/CT_734/TC_0107 family.

Its subcellular location is the cell membrane. This chain is Probable lipoprotein CT_734, found in Chlamydia trachomatis serovar D (strain ATCC VR-885 / DSM 19411 / UW-3/Cx).